A 643-amino-acid chain; its full sequence is uncharacterized protein (643 aa).

The chain crosses the membrane as a helical span at residues 9 to 29; the sequence is IVLALLLLLLPVVCGDVSVYK.

The protein resides in the membrane. This is an uncharacterized protein from Methanocaldococcus jannaschii (strain ATCC 43067 / DSM 2661 / JAL-1 / JCM 10045 / NBRC 100440) (Methanococcus jannaschii).